The primary structure comprises 258 residues: MENTATAAKAKLEVKNLNFYYGKFHAIRNVNMSIRENKVTAFIGPSGCGKSTLLRTFNRMFELYPGQRAEGEILLDGENLLTSKTDISLIRAKVGMVFQKPTPFPMSIYDNIAFGVRLFERLSKGEMDERVEWALSKAALWNEVKDKLHQSGNSLSGGQQQRLCIARGVAIKPEVLLLDEPCSALDPISTAKIEELIAELKHEYTVVIVTHNMQQAARCSDYTAYMYLGELMEYGATDQIFVKPARKETEDYITGRFG.

Positions 12–253 (LEVKNLNFYY…PARKETEDYI (242 aa)) constitute an ABC transporter domain. Residue 44-51 (GPSGCGKS) coordinates ATP.

This sequence belongs to the ABC transporter superfamily. Phosphate importer (TC 3.A.1.7) family. As to quaternary structure, the complex is composed of two ATP-binding proteins (PstB), two transmembrane proteins (PstC and PstA) and a solute-binding protein (PstS).

Its subcellular location is the cell inner membrane. The enzyme catalyses phosphate(out) + ATP + H2O = ADP + 2 phosphate(in) + H(+). Functionally, part of the ABC transporter complex PstSACB involved in phosphate import. Responsible for energy coupling to the transport system. The chain is Phosphate import ATP-binding protein PstB from Bordetella pertussis (strain Tohama I / ATCC BAA-589 / NCTC 13251).